We begin with the raw amino-acid sequence, 411 residues long: NADH-quinone oxidoreductase subunit H (411 aa).

Transmembrane regions (helical) follow at residues 18–38, 84–104, 124–144, 165–185, 198–218, 260–280, 288–308, 321–341, and 352–372; these read LAKS…AILI, WIYL…FAVI, LPVA…GIVL, VISY…YAGT, TWYI…MVGE, VSAL…PISI, WWPL…FMWL, MALG…IVAI, and APAT…ALLG.

This sequence belongs to the complex I subunit 1 family. NDH-1 is composed of 14 different subunits. Subunits NuoA, H, J, K, L, M, N constitute the membrane sector of the complex.

The protein localises to the cell membrane. The catalysed reaction is a quinone + NADH + 5 H(+)(in) = a quinol + NAD(+) + 4 H(+)(out). Functionally, NDH-1 shuttles electrons from NADH, via FMN and iron-sulfur (Fe-S) centers, to quinones in the respiratory chain. The immediate electron acceptor for the enzyme in this species is believed to be menaquinone. Couples the redox reaction to proton translocation (for every two electrons transferred, four hydrogen ions are translocated across the cytoplasmic membrane), and thus conserves the redox energy in a proton gradient. This subunit may bind ubiquinone. In Mycolicibacterium vanbaalenii (strain DSM 7251 / JCM 13017 / BCRC 16820 / KCTC 9966 / NRRL B-24157 / PYR-1) (Mycobacterium vanbaalenii), this protein is NADH-quinone oxidoreductase subunit H.